Consider the following 130-residue polypeptide: MPGKTAQKGGRPSGKGKKKKQTLKFTIDCTLPVEDGIMDASNFEQFLQERIKVNGKTKNLTTNIVIERKKSKVTVTSEIAFSKRYLKYLTKKYLKKNNLRDWLRVVAANKESYELRYFQINQDDEEEEDD.

The segment at Met-1–Gln-21 is disordered. Positions Lys-17–Lys-20 match the Nuclear localization signal motif.

Belongs to the eukaryotic ribosomal protein eL22 family.

In Tripneustes gratilla (Hawaian sea urchin), this protein is Large ribosomal subunit protein eL22 (RPL22).